Reading from the N-terminus, the 244-residue chain is 1-(5-phosphoribosyl)-5-[(5-phosphoribosylamino)methylideneamino] imidazole-4-carboxamide isomerase (244 aa).

Residue D8 is the Proton acceptor of the active site. D129 (proton donor) is an active-site residue.

It belongs to the HisA/HisF family.

The protein localises to the cytoplasm. The catalysed reaction is 1-(5-phospho-beta-D-ribosyl)-5-[(5-phospho-beta-D-ribosylamino)methylideneamino]imidazole-4-carboxamide = 5-[(5-phospho-1-deoxy-D-ribulos-1-ylimino)methylamino]-1-(5-phospho-beta-D-ribosyl)imidazole-4-carboxamide. Its pathway is amino-acid biosynthesis; L-histidine biosynthesis; L-histidine from 5-phospho-alpha-D-ribose 1-diphosphate: step 4/9. This chain is 1-(5-phosphoribosyl)-5-[(5-phosphoribosylamino)methylideneamino] imidazole-4-carboxamide isomerase, found in Geobacter sulfurreducens (strain ATCC 51573 / DSM 12127 / PCA).